Consider the following 274-residue polypeptide: Leucine-rich repeat-containing protein 10 (274 aa).

8 LRR repeats span residues 30-51 (LDRMVDLSGSQLRRFPLHVCSF), 52-74 (TELVKLYLSDNHLHSLPPDLAQL), 76-97 (NLQILALDFNNFKALPRVVCTL), 98-120 (KQLCILYLGNNKLCDLPDELSLL), 121-143 (QNLRTLWLESNCLTRLPDVVCEL), 145-166 (LLKTLHAGSNALRLLPGQLRRL), 167-189 (RELRTIWLSGNQLADFPSVLLRM), and 191-213 (FLEVIDVDRNSIRYFPSLAHLTN). Residues 236 to 274 (RVGRWAEETPEPDPRKARRYALAKEENQEPPPPLLPSSS) form a disordered region. Residues 239–250 (RWAEETPEPDPR) show a composition bias toward basic and acidic residues. Residues 264–274 (EPPPPLLPSSS) show a composition bias toward pro residues.

Detected specifically in the heart.

The protein resides in the nucleus. May play important roles in cardiac development and/or cardiac function. This is Leucine-rich repeat-containing protein 10 (Lrrc10) from Mus musculus (Mouse).